Reading from the N-terminus, the 125-residue chain is Ribosome-binding factor A (125 aa).

This sequence belongs to the RbfA family. In terms of assembly, monomer. Binds 30S ribosomal subunits, but not 50S ribosomal subunits or 70S ribosomes.

Its subcellular location is the cytoplasm. In terms of biological role, one of several proteins that assist in the late maturation steps of the functional core of the 30S ribosomal subunit. Associates with free 30S ribosomal subunits (but not with 30S subunits that are part of 70S ribosomes or polysomes). Required for efficient processing of 16S rRNA. May interact with the 5'-terminal helix region of 16S rRNA. The protein is Ribosome-binding factor A of Xylella fastidiosa (strain M12).